We begin with the raw amino-acid sequence, 354 residues long: Serum paraoxonase/arylesterase 2 (354 aa).

Asn-29 carries N-linked (GlcNAc...) asparagine glycosylation. An intrachain disulfide couples Cys-42 to Cys-352. Positions 53 and 54 each coordinate Ca(2+). The Proton acceptor role is filled by His-114. Ile-116, Asn-167, Asp-168, and Asn-223 together coordinate Ca(2+). N-linked (GlcNAc...) asparagine glycosylation occurs at Asn-254. Ca(2+)-binding residues include Asp-268 and Asn-269. Residues Asn-269 and Asn-323 are each glycosylated (N-linked (GlcNAc...) asparagine).

The protein belongs to the paraoxonase family. Ca(2+) is required as a cofactor. Glycosylated. In terms of processing, the signal sequence is not cleaved.

It is found in the membrane. The enzyme catalyses a phenyl acetate + H2O = a phenol + acetate + H(+). The catalysed reaction is An aryl dialkyl phosphate + H2O = dialkyl phosphate + an aryl alcohol.. In terms of biological role, the absence of paraoxonase activity in turkey and chicken blood and in turkey liver indicates that PON2, if expressed, does not hydrolyze paraoxon. This chain is Serum paraoxonase/arylesterase 2 (PON2), found in Gallus gallus (Chicken).